The chain runs to 311 residues: Formimidoylglutamase (311 aa).

Mn(2+) contacts are provided by His-130, Asp-155, His-157, Asp-159, Cys-242, and Asp-244.

The protein belongs to the arginase family. The cofactor is Mn(2+).

It carries out the reaction N-formimidoyl-L-glutamate + H2O = formamide + L-glutamate. It participates in amino-acid degradation; L-histidine degradation into L-glutamate; L-glutamate from N-formimidoyl-L-glutamate (hydrolase route): step 1/1. Functionally, catalyzes the conversion of N-formimidoyl-L-glutamate to L-glutamate and formamide. The polypeptide is Formimidoylglutamase (Staphylococcus aureus (strain bovine RF122 / ET3-1)).